A 114-amino-acid polypeptide reads, in one-letter code: Beta-microseminoprotein J1 (114 aa).

A signal peptide spans 1–20 (MNVLLGGLVIFATFVTLCNA). 5 disulfide bridges follow: Cys-22-Cys-70, Cys-38-Cys-62, Cys-57-Cys-93, Cys-60-Cys-69, and Cys-84-Cys-107.

It belongs to the beta-microseminoprotein family.

The protein localises to the secreted. This Saguinus oedipus (Cotton-top tamarin) protein is Beta-microseminoprotein J1 (MSPJ).